The chain runs to 306 residues: MIPLLAIVGPTAVGKTALSLHLARLFDGEIVSADSRQVYRWMDIGTAKPTPAERATVPHHLIDVVDPDEDFSLALYQDMATAAIADIAARGKLPLLVGGTGQYLAAVLQGWQLPRVAPRPDIRAALERQASEQGGEALYARLKEVDPIAAARILPGNVRRIIRALEVYEATGIPISEQRSVQPPPYRITTIWLTLPAPVLYARIDARVEAMMAAGLLDEVRGLLERGYHWNLPSMSGLGYREFRPYFEGRATLEEAVTRLKYDTHTFARRQPAWFRRLPNIVTLPADAPDLLQRAEAIVRQTFDSS.

9–16 is an ATP binding site; sequence GPTAVGKT. Residue 11–16 coordinates substrate; sequence TAVGKT. Positions 34–37 are interaction with substrate tRNA; that stretch reads DSRQ.

Belongs to the IPP transferase family. In terms of assembly, monomer. Mg(2+) is required as a cofactor.

It carries out the reaction adenosine(37) in tRNA + dimethylallyl diphosphate = N(6)-dimethylallyladenosine(37) in tRNA + diphosphate. In terms of biological role, catalyzes the transfer of a dimethylallyl group onto the adenine at position 37 in tRNAs that read codons beginning with uridine, leading to the formation of N6-(dimethylallyl)adenosine (i(6)A). The chain is tRNA dimethylallyltransferase from Roseiflexus castenholzii (strain DSM 13941 / HLO8).